The following is a 1260-amino-acid chain: Kinesin-like protein KIN-14E (1260 aa).

One can recognise a MyTH4 domain in the interval 115–274 (FQKDPIPTSL…PGREEIEALL (160 aa)). Positions 279–593 (LTTIVFFLDE…HINDVMLRRY (315 aa)) constitute an FERM domain. 2 coiled-coil regions span residues 615 to 676 (QNFE…LLEV) and 753 to 853 (SKRL…TAAI). The 322-residue stretch at 888–1209 (KIRVYCRIRP…LLYASRVRTI (322 aa)) folds into the Kinesin motor domain. 972 to 977 (GSGKTF) contacts ATP. The calmodulin-binding stretch occupies residues 1217 to 1239 (ISSKEMVRLKKLVAYWKEQAGKK). Residues 1221–1260 (EMVRLKKLVAYWKEQAGKKGEEEDLVDIEEDRTRKDEADS) form a homodimerization domain region. The interval 1236-1260 (AGKKGEEEDLVDIEEDRTRKDEADS) is disordered. Basic and acidic residues predominate over residues 1251–1260 (DRTRKDEADS).

Belongs to the TRAFAC class myosin-kinesin ATPase superfamily. Kinesin family. KIN-14 subfamily. As to quaternary structure, homodimer (via C-terminus). Binds microtubules via its N-terminus containing the MyTH4 domain and binds F-actin via its FERM domain. Interacts with KIPK1. Interacts with KIPK2. Interacts with AN. Interacts with AIR9. Interacts (via C-terminus) with KIC, CAM2, CAM4 and CAM6. KIC and calmodulin show competitive binding to KCBP. Binding to calmodulin inhibits microtubule binding activity. Binding to KIC inhibits microtubule binding activity and microtubule-stimulated ATPase activity. Widely expressed with the highest levels in flowers. Strongly expressed in the root tip. Highly detected in the branch apex of the trichome.

The protein localises to the cytoplasm. It localises to the cell cortex. The protein resides in the cytoskeleton. Its subcellular location is the spindle. It is found in the phragmoplast. In terms of biological role, minus-end microtubule-dependent motor protein involved in the regulation of cell division and trichome morphogenesis through microtubules bundling. Possesses basal and microtubule-stimulated ATPase activities. Acts as a hub that brings together microtubules and actin filaments to modulate the cytoskeleton during trichome formation and morphogenesis. Could be involved in the negative regulation of root growth. In Arabidopsis thaliana (Mouse-ear cress), this protein is Kinesin-like protein KIN-14E.